The following is a 580-amino-acid chain: MPEFRVWAPKPALVRLDVNGAVHAMTRSADGWWHTTVAAPADARYGYLLDDDPTVLPDPRSARQPDGVHARSQRWEPPGQFGAARTDTGWPGRSVEGAVIYELHIGTFTTAGTFDAAIEKLDYLVDLGIDFVELMPVNSFAGTRGWGYDGVLWYSVHEPYGGPDGLVRFIDACHARRLGVLIDAVFNHLGPSGNYLPRFGPYLSSASNPWGDGINIAGADSDEVRHYIIDCALRWMRDFHADGLRLDAVHALVDTTAVHVLEELANATRWLSGQLGRPLSLIAETDRNDPRLITRPSHGGYGITAQWNDDIHHAIHTAVSGERQGYYADFGSLATLAYTLRNGYFHAGTYSSFRRRRHGRALDTSAIPATRLLAYTCTHDQVGNRALGDRPSQYLTGGQLAIKAALTLGSPYTAMLFMGEEWGASSPFQFFCSHPEPELAHSTVAGRKEEFAEHGWAADDIPDPQDPQTFQRCKLNWAEAGSGEHARLHRFYRDLIALRHNEADLADPWLDHLMVDYDEQQRWVVMRRGQLMIACNLGAEPTCVPVSGELVLAWESPIIGDNSTELAAYSLAILRAAEPA.

The segment at 56–88 (LPDPRSARQPDGVHARSQRWEPPGQFGAARTDT) is disordered. Residues 60–69 (RSARQPDGVH) are compositionally biased toward basic and acidic residues. 245-250 (RLDAVH) is a substrate binding site. Catalysis depends on D247, which acts as the Nucleophile. E284 (proton donor) is an active-site residue. Substrate is bound by residues 309 to 313 (DDIHH) and 379 to 384 (HDQVGN).

It belongs to the glycosyl hydrolase 13 family.

Its subcellular location is the cytoplasm. The catalysed reaction is hydrolysis of (1-&gt;4)-alpha-D-glucosidic linkage in 4-alpha-D-[(1-&gt;4)-alpha-D-glucanosyl]n trehalose to yield trehalose and (1-&gt;4)-alpha-D-glucan.. The protein operates within glycan biosynthesis; trehalose biosynthesis. In terms of biological role, is involved in the biosynthesis of trehalose but not in that of capsular glucan and glycogen. This is Malto-oligosyltrehalose trehalohydrolase (treZ) from Mycobacterium tuberculosis (strain CDC 1551 / Oshkosh).